Here is a 732-residue protein sequence, read N- to C-terminus: Acylamino-acid-releasing enzyme (732 aa).

M1 carries the N-acetylmethionine modification. Phosphoserine is present on residues S185 and S187. Active-site charge relay system residues include S587, D675, and H707.

In terms of assembly, homotetramer. In terms of tissue distribution, expressed in erythrocytes (at protein level).

The protein resides in the cytoplasm. The enzyme catalyses Cleavage of an N-acetyl or N-formyl amino acid from the N-terminus of a polypeptide.. With respect to regulation, homotetramerization is required for activity. Tetramerization results in the formation of a gated channel which is involved in substrate selection and substrate access to the catalytic sites. This enzyme catalyzes the hydrolysis of the N-terminal peptide bond of an N-acetylated peptide to generate an N-acetylated amino acid and a peptide with a free N-terminus. It preferentially cleaves off Ac-Ala, Ac-Met and Ac-Ser. Also, involved in the degradation of oxidized and glycated proteins. The protein is Acylamino-acid-releasing enzyme (APEH) of Homo sapiens (Human).